The chain runs to 75 residues: DNA-directed RNA polymerase subunit Rpo5 (75 aa).

The protein belongs to the archaeal Rpo5/eukaryotic RPB5 RNA polymerase subunit family. In terms of assembly, part of the RNA polymerase complex.

The protein resides in the cytoplasm. The enzyme catalyses RNA(n) + a ribonucleoside 5'-triphosphate = RNA(n+1) + diphosphate. Its function is as follows. DNA-dependent RNA polymerase (RNAP) catalyzes the transcription of DNA into RNA using the four ribonucleoside triphosphates as substrates. The sequence is that of DNA-directed RNA polymerase subunit Rpo5 from Pyrobaculum aerophilum (strain ATCC 51768 / DSM 7523 / JCM 9630 / CIP 104966 / NBRC 100827 / IM2).